A 155-amino-acid polypeptide reads, in one-letter code: MIYVDADACPVKPEVLKVAERHGLEVTFVANSGLRPSRDPMVRNVIVSNAFDAADNWIAERAGAGDVVVTADVPLAVRCVATGAFVSGPTGRVFDETNIGMASAMRDLGAHLRETGESKGYNASFSPKDRSRFLETFDRLCRRAKSLAGETGGRP.

Belongs to the UPF0178 family.

This Rhizobium etli (strain ATCC 51251 / DSM 11541 / JCM 21823 / NBRC 15573 / CFN 42) protein is UPF0178 protein RHE_CH02229.